The sequence spans 722 residues: D-(-)-3-hydroxybutyrate oligomer hydrolase (722 aa).

Over residues 1 to 11 the composition is skewed to polar residues; the sequence is MQQRHLSQSAH. Residues 1–20 form a disordered region; that stretch reads MQQRHLSQSAHSHGHGTRRA. A signal peptide spans 1-36; the sequence is MQQRHLSQSAHSHGHGTRRAHRRNTIAIAVATLAVA. S327 serves as the catalytic Charge relay system. The tract at residues 671–697 is disordered; sequence PPSQVVRTTPRGGADTDTVGPRIQPSN.

This sequence belongs to the D-(-)-3-hydroxybutyrate oligomer hydrolase family.

It is found in the secreted. It catalyses the reaction (3R)-hydroxybutanoate dimer + H2O = 2 (R)-3-hydroxybutanoate + H(+). The protein operates within lipid metabolism; butanoate metabolism. Participates in the degradation of poly-3-hydroxybutyrate (PHB). It works downstream of poly(3-hydroxybutyrate) depolymerase, hydrolyzing D(-)-3-hydroxybutyrate oligomers of various length (3HB-oligomers) into 3HB-monomers. This Cupriavidus metallidurans (strain ATCC 43123 / DSM 2839 / NBRC 102507 / CH34) (Ralstonia metallidurans) protein is D-(-)-3-hydroxybutyrate oligomer hydrolase.